The following is a 537-amino-acid chain: Formimidoyltransferase-cyclodeaminase (537 aa).

A formiminotransferase N-subdomain region spans residues 1–181 (MNKLVECVPN…GASVTGARSF (181 aa)). Catalysis depends on His-82, which acts as the For formimidoyltransferase activity. 163–172 (GPAKFIPSYG) contributes to the folate binding site. A formiminotransferase C-subdomain region spans residues 182-326 (LIAYNVNILG…PKKRIIDYMV (145 aa)). The tract at residues 327–335 (QEDLKVTQP) is linker. The segment at 336–537 (LASMSVRGFV…VLEILSNRKE (202 aa)) is cyclodeaminase/cyclohydrolase. Asp-413 (for cyclodeaminase activity) is an active-site residue.

It in the C-terminal section; belongs to the cyclodeaminase/cyclohydrolase family. In the N-terminal section; belongs to the formiminotransferase family. Homooctamer, including four polyglutamate binding sites. The subunits are arranged as a tetramer of dimers, and form a planar ring-shaped structure.

It localises to the cytoplasm. It is found in the cytosol. Its subcellular location is the golgi apparatus. The protein resides in the cytoskeleton. The protein localises to the microtubule organizing center. It localises to the centrosome. It is found in the centriole. It carries out the reaction 5-formimidoyltetrahydrofolate + L-glutamate = N-formimidoyl-L-glutamate + (6S)-5,6,7,8-tetrahydrofolate. It catalyses the reaction 5-formimidoyltetrahydrofolate + 2 H(+) = (6R)-5,10-methenyltetrahydrofolate + NH4(+). The protein operates within amino-acid degradation; L-histidine degradation into L-glutamate; L-glutamate from N-formimidoyl-L-glutamate (transferase route): step 1/1. In terms of biological role, folate-dependent enzyme, that displays both transferase and deaminase activity. Serves to channel one-carbon units from formiminoglutamate to the folate pool. The polypeptide is Formimidoyltransferase-cyclodeaminase (ftcd) (Dictyostelium discoideum (Social amoeba)).